Consider the following 212-residue polypeptide: ER lumen protein-retaining receptor 1 (212 aa).

Residues 1–4 lie on the Lumenal side of the membrane; sequence MNLF. A helical membrane pass occupies residues 5–24; that stretch reads RFLGDLSHLLAIILLLLKIW. Residues 25-32 are Cytoplasmic-facing; the sequence is KSRSCAGI. A helical transmembrane segment spans residues 33 to 52; sequence SGKSQVLFAVVFTARYLDLF. The tract at residues 47–48 is interaction with the K-D-E-L motif on target proteins; sequence RY. Residues 53–58 lie on the Lumenal side of the membrane; the sequence is TNYISL. A helical transmembrane segment spans residues 59-79; that stretch reads YNTCMKVVYIACSFTTVWMIY. At 80–92 the chain is on the cytoplasmic side; that stretch reads SKFKATYDGNHDT. A helical membrane pass occupies residues 93 to 110; that stretch reads FRVEFLVIPTAILAFLVN. Residues 111-116 lie on the Lumenal side of the membrane; that stretch reads HDFTPL. The helical transmembrane segment at 117 to 135 threads the bilayer; the sequence is EILWTFSIYLESVAILPQL. Residues 136 to 149 are Cytoplasmic-facing; that stretch reads FMVSKTGEAETITS. Residues 150-168 traverse the membrane as a helical segment; it reads HYLFALGVYRTLYLFNWIW. Residues 159–169 form an interaction with the K-D-E-L motif on target proteins region; that stretch reads RTLYLFNWIWR. The Lumenal portion of the chain corresponds to 169–178; it reads RYHFEGFFDL. Residues 179-199 traverse the membrane as a helical segment; that stretch reads IAIVAGLVQTVLYCDFFYLYI. The Cytoplasmic segment spans residues 200–212; the sequence is TKVLKGKKLSLPA. Positions 204-207 are important for recycling of cargo proteins with the sequence motif K-D-E-L from the Golgi to the endoplasmic reticulum; sequence KGKK. S209 carries the post-translational modification Phosphoserine; by PKA.

This sequence belongs to the ERD2 family. As to quaternary structure, upon ligand binding the receptor oligomerizes and interacts with components of the transport machinery such as ARFGAP1 and ARF1. In terms of processing, phosphorylation by PKA at Ser-209 is required for endoplasmic reticulum retention function.

The protein localises to the golgi apparatus membrane. The protein resides in the cytoplasmic vesicle. Its subcellular location is the COPI-coated vesicle membrane. It is found in the endoplasmic reticulum membrane. It localises to the endoplasmic reticulum-Golgi intermediate compartment membrane. Functionally, receptor for the C-terminal sequence motif K-D-E-L that is present on endoplasmic reticulum resident proteins and that mediates their recycling from the Golgi back to the endoplasmic reticulum. This chain is ER lumen protein-retaining receptor 1 (KDELR1), found in Bos taurus (Bovine).